The primary structure comprises 886 residues: Alanine--tRNA ligase (886 aa).

Residues His-564, His-568, Cys-666, and His-670 each coordinate Zn(2+).

This sequence belongs to the class-II aminoacyl-tRNA synthetase family. The cofactor is Zn(2+).

It is found in the cytoplasm. It catalyses the reaction tRNA(Ala) + L-alanine + ATP = L-alanyl-tRNA(Ala) + AMP + diphosphate. Functionally, catalyzes the attachment of alanine to tRNA(Ala) in a two-step reaction: alanine is first activated by ATP to form Ala-AMP and then transferred to the acceptor end of tRNA(Ala). Also edits incorrectly charged Ser-tRNA(Ala) and Gly-tRNA(Ala) via its editing domain. The protein is Alanine--tRNA ligase of Prochlorococcus marinus subsp. pastoris (strain CCMP1986 / NIES-2087 / MED4).